Reading from the N-terminus, the 1062-residue chain is Carbamoyl phosphate synthase large chain (1062 aa).

Residues 1–401 (MPKRTDIHKI…AMQKAVQSLE (401 aa)) form a carboxyphosphate synthetic domain region. The ATP site is built by arginine 129, arginine 169, glycine 175, glycine 176, lysine 208, isoleucine 210, glutamate 215, glycine 241, isoleucine 242, histidine 243, glutamine 284, and glutamate 298. The ATP-grasp 1 domain maps to 133–327 (KELCQKLGEP…IAKMAAKIAI (195 aa)). Positions 284, 298, and 300 each coordinate Mg(2+). Mn(2+) contacts are provided by glutamine 284, glutamate 298, and asparagine 300. The segment at 402–546 (IDEKDLYSAK…YSTYDGENES (145 aa)) is oligomerization domain. Residues 547 to 929 (RKSGKKSVIV…ALYKAFAGAK (383 aa)) are carbamoyl phosphate synthetic domain. Residues 671-861 (DQIIKSLHLH…MAQVATRVIM (191 aa)) form the ATP-grasp 2 domain. The ATP site is built by arginine 707, aspartate 746, leucine 748, glutamate 752, glycine 777, valine 778, histidine 779, serine 780, glutamine 820, and glutamate 832. Glutamine 820, glutamate 832, and asparagine 834 together coordinate Mg(2+). Residues glutamine 820, glutamate 832, and asparagine 834 each contribute to the Mn(2+) site. Residues 930–1062 (MQLPENGNVL…NRSFATDALK (133 aa)) enclose the MGS-like domain. The interval 930–1062 (MQLPENGNVL…NRSFATDALK (133 aa)) is allosteric domain.

Belongs to the CarB family. Composed of two chains; the small (or glutamine) chain promotes the hydrolysis of glutamine to ammonia, which is used by the large (or ammonia) chain to synthesize carbamoyl phosphate. Tetramer of heterodimers (alpha,beta)4. Mg(2+) serves as cofactor. Requires Mn(2+) as cofactor.

It carries out the reaction hydrogencarbonate + L-glutamine + 2 ATP + H2O = carbamoyl phosphate + L-glutamate + 2 ADP + phosphate + 2 H(+). The enzyme catalyses hydrogencarbonate + NH4(+) + 2 ATP = carbamoyl phosphate + 2 ADP + phosphate + 2 H(+). The protein operates within amino-acid biosynthesis; L-arginine biosynthesis; carbamoyl phosphate from bicarbonate: step 1/1. Its pathway is pyrimidine metabolism; UMP biosynthesis via de novo pathway; (S)-dihydroorotate from bicarbonate: step 1/3. Large subunit of the glutamine-dependent carbamoyl phosphate synthetase (CPSase). CPSase catalyzes the formation of carbamoyl phosphate from the ammonia moiety of glutamine, carbonate, and phosphate donated by ATP, constituting the first step of 2 biosynthetic pathways, one leading to arginine and/or urea and the other to pyrimidine nucleotides. The large subunit (synthetase) binds the substrates ammonia (free or transferred from glutamine from the small subunit), hydrogencarbonate and ATP and carries out an ATP-coupled ligase reaction, activating hydrogencarbonate by forming carboxy phosphate which reacts with ammonia to form carbamoyl phosphate. The polypeptide is Carbamoyl phosphate synthase large chain (Lactobacillus helveticus (strain DPC 4571)).